The following is a 98-amino-acid chain: NADH-ubiquinone oxidoreductase chain 4L (98 aa).

Transmembrane regions (helical) follow at residues 1-21 (MPSI…GTLI), 26-46 (LMSS…LTSL), and 61-81 (IILL…LVMV).

Belongs to the complex I subunit 4L family. As to quaternary structure, core subunit of respiratory chain NADH dehydrogenase (Complex I) which is composed of 45 different subunits.

The protein localises to the mitochondrion inner membrane. It catalyses the reaction a ubiquinone + NADH + 5 H(+)(in) = a ubiquinol + NAD(+) + 4 H(+)(out). Functionally, core subunit of the mitochondrial membrane respiratory chain NADH dehydrogenase (Complex I) which catalyzes electron transfer from NADH through the respiratory chain, using ubiquinone as an electron acceptor. Part of the enzyme membrane arm which is embedded in the lipid bilayer and involved in proton translocation. This is NADH-ubiquinone oxidoreductase chain 4L (MT-ND4L) from Otolemur crassicaudatus (Brown greater galago).